The chain runs to 574 residues: FAD-linked oxidoreductase penH (574 aa).

The first 25 residues, 1-25 (MLPRALTLSALLALLLAIYLALAPA), serve as a signal peptide directing secretion. Asparagine 48, asparagine 107, asparagine 193, asparagine 368, and asparagine 385 each carry an N-linked (GlcNAc...) asparagine glycan. In terms of domain architecture, FAD-binding PCMH-type spans 121–305 (HQGRIPLYAA…VRVTMRTYPD (185 aa)).

This sequence belongs to the oxygen-dependent FAD-linked oxidoreductase family. FAD serves as cofactor.

The enzyme catalyses peniprequinolone + A = yaequinolone E + AH2. It participates in secondary metabolite biosynthesis. Its pathway is alkaloid biosynthesis. It functions in the pathway mycotoxin biosynthesis. Its function is as follows. FAD-linked oxidoreductase; part of the gene cluster that mediates the biosynthesis of penigequinolones, potent insecticidal alkaloids that contain a highly modified 10-carbon prenyl group. The first stage is catalyzed by the nonribosomal peptide synthetase penN that condenses anthranilic acid and O-methyl-L-tyrosine to produce 4'-methoxycyclopeptin. 4'-methoxycyclopeptin is then converted to 4'-methoxydehydrocyclopeptin by the ketoglutarate-dependent dioxygenase penM through dehydrogenation to form a double bond between C-alpha and C-beta of the O-methyltyrosine side chain. PenM also converts its first product methoxydehydrocyclopeptin to 4'-methoxycyclopenin. The following conversion of 4'methoxycyclopenin into 4'-methoxyviridicatin is catalyzed by the cyclopenase penL. 4'-methoxyviridicatin is the precursor of quinolone natural products, and is further converted to quinolinone B. The prenyltransferase penI then catalyzes the canonical Friedel-Crafts alkylation of quinolinone B with dimethylallyl cation to yield dimethylallyl quinolone, which is subjected to FAD-dependent dehydrogenation by the FAD-linked oxidoreductase penH to yield conjugated aryl diene. The delta(3') double bond then serves as the site of the second alkylation with DMAPP catalyzed by the prenyltransferase penG to yield a carbenium ion intermediate, which can be attacked by H(2)O to yield a styrenyl quinolone containing a C3'-hydroxyprenyl chain, or undergo cyclization to yield yaequinolones J1 and J2. The conversion of the styrenyl quinolone into the tetrahydrofuran-containing yaequinolone C is performed by the FAD-dependent monooxygenase penE and involves epoxidation of the terminal C7'-C8' olefin, followed by epoxide ring opening initiated by the C3' hydroxyl group. The predicted cysteine hydrolase penJ acts as an epoxide hydrolase that enhances the rate of the 5-exo-tet cyclization step, increasing the yield of yaequinolone C. PenF catalyzes the cationic rearrangement of the epoxide formed by penE (before ring opening to produce yaequinolone C) into yaequinolone D. Finally, the short-chain dehydrogenase/reductase (SDR)-like reductase penD, catalyzes both the dehydration of yaequinolone D and the reduction of the resulting oxonium to yield penigequinolone. In Penicillium thymicola, this protein is FAD-linked oxidoreductase penH.